The chain runs to 139 residues: ATP synthase epsilon chain (139 aa).

This sequence belongs to the ATPase epsilon chain family. As to quaternary structure, F-type ATPases have 2 components, CF(1) - the catalytic core - and CF(0) - the membrane proton channel. CF(1) has five subunits: alpha(3), beta(3), gamma(1), delta(1), epsilon(1). CF(0) has three main subunits: a, b and c.

It localises to the cell inner membrane. Its function is as follows. Produces ATP from ADP in the presence of a proton gradient across the membrane. The sequence is that of ATP synthase epsilon chain from Pseudomonas putida (strain W619).